The primary structure comprises 881 residues: Valine--tRNA ligase (881 aa).

The short motif at 76 to 86 (PTVSGSLHIGH) is the 'HIGH' region element. The disordered stretch occupies residues 493-526 (DSPILPDESQLPVDPSSQAPEGYTEDQRGKPGGF). Positions 608–612 (KMSKS) match the 'KMSKS' region motif. ATP is bound at residue Lys611.

This sequence belongs to the class-I aminoacyl-tRNA synthetase family. ValS type 2 subfamily. As to quaternary structure, monomer.

It is found in the cytoplasm. The catalysed reaction is tRNA(Val) + L-valine + ATP = L-valyl-tRNA(Val) + AMP + diphosphate. Functionally, catalyzes the attachment of valine to tRNA(Val). As ValRS can inadvertently accommodate and process structurally similar amino acids such as threonine, to avoid such errors, it has a 'posttransfer' editing activity that hydrolyzes mischarged Thr-tRNA(Val) in a tRNA-dependent manner. This chain is Valine--tRNA ligase, found in Thermobifida fusca (strain YX).